The following is a 128-amino-acid chain: Probable 4-amino-4-deoxy-L-arabinose-phosphoundecaprenol flippase subunit ArnF (128 aa).

Topologically, residues 1–2 (MG) are cytoplasmic. The chain crosses the membrane as a helical span at residues 3–23 (LMWGLFSVIIASVAQLSLGFA). Residues 24 to 35 (ASHLPPMTHLWD) lie on the Periplasmic side of the membrane. Residues 36–56 (FIAALLAFGLDARILLLGLLG) form a helical membrane-spanning segment. Residues 57 to 76 (YLLSVFCWYKTLHKLALSKA) lie on the Cytoplasmic side of the membrane. The chain crosses the membrane as a helical span at residues 77 to 97 (YALLSMSYVLVWIASMVLPGW). Over 98–100 (EGT) the chain is Periplasmic. Residues 101-121 (FSLKALLGVACIMSGLMLIFL) form a helical membrane-spanning segment. At 122 to 128 (PMTKQRY) the chain is on the cytoplasmic side.

This sequence belongs to the ArnF family. As to quaternary structure, heterodimer of ArnE and ArnF.

The protein localises to the cell inner membrane. Its pathway is bacterial outer membrane biogenesis; lipopolysaccharide biosynthesis. Its function is as follows. Translocates 4-amino-4-deoxy-L-arabinose-phosphoundecaprenol (alpha-L-Ara4N-phosphoundecaprenol) from the cytoplasmic to the periplasmic side of the inner membrane. In Escherichia coli (strain 55989 / EAEC), this protein is Probable 4-amino-4-deoxy-L-arabinose-phosphoundecaprenol flippase subunit ArnF.